The sequence spans 148 residues: Large-conductance mechanosensitive channel (148 aa).

The next 2 helical transmembrane spans lie at 9 to 29 (AFAVKGNVVDMAVGIIIGAAF) and 79 to 99 (IQTVIDFIIVAFAIFMGVKAI).

This sequence belongs to the MscL family. Homopentamer.

The protein resides in the cell inner membrane. Its function is as follows. Channel that opens in response to stretch forces in the membrane lipid bilayer. May participate in the regulation of osmotic pressure changes within the cell. This is Large-conductance mechanosensitive channel from Pseudomonas savastanoi pv. phaseolicola (strain 1448A / Race 6) (Pseudomonas syringae pv. phaseolicola (strain 1448A / Race 6)).